The following is a 326-amino-acid chain: UDP-N-acetylglucosamine transporter (326 aa).

The next 8 membrane-spanning stretches (helical) occupy residues 4-24, 38-58, 136-156, 174-194, 212-232, 244-264, 269-289, and 293-313; these read NLKY…VLTM, LSST…ILLV, LGVY…FVQW, FVGL…GVYF, LGFF…GELV, LTWI…AVIK, ILKG…SYFW, and FVPT…TFLY.

It belongs to the nucleotide-sugar transporter family. SLC35A subfamily. As to quaternary structure, interacts with SLC35A2; the interaction is reduced in the presence of SLC35A4. Found in a complex with SLC35A2 and SLC35A4. Interacts with MGAT4B. In terms of processing, O-Glcnacylation regulates the stability of SLC35A3 and the specific complex formation with MGAT4B.

The protein resides in the golgi apparatus membrane. The enzyme catalyses UMP(out) + UDP-N-acetyl-alpha-D-glucosamine(in) = UMP(in) + UDP-N-acetyl-alpha-D-glucosamine(out). In terms of biological role, transports diphosphate-N-acetylglucosamine (UDP-GlcNAc) from the cytosol into the lumen of the Golgi apparatus, functioning as an antiporter that exchanges UDP-N-acetyl-alpha-D-glucosamine for UMP. May supply UDP-GlcNAc as substrate for Golgi-resident glycosyltransferases that generate highly branched, multiantennary complex N-glycans and keratan sulfate. However, the exact role of SLC35A3 still needs to be elucidated, it could be a member of a catalytically more efficient multiprotein complex rather than function independently as a single transporter. The polypeptide is UDP-N-acetylglucosamine transporter (SLC35A3) (Bos taurus (Bovine)).